Reading from the N-terminus, the 116-residue chain is U16-barytoxin-Tl1c (116 aa).

A signal peptide spans 1–20 (MKTIIVFLSLLVLATKFGDA). The propeptide occupies 21 to 74 (NEGVNQEQMKEVIQNEFREDFLNEMAAMSLLQQLEAIESTLLEKEADRNSRQKR). 3 disulfides stabilise this stretch: Cys-75-Cys-90, Cys-82-Cys-95, and Cys-89-Cys-110.

This sequence belongs to the neurotoxin 14 (magi-1) family. 06 (ICK-Trit) subfamily. As to expression, expressed by the venom gland.

The protein resides in the secreted. In terms of biological role, ion channel inhibitor. The polypeptide is U16-barytoxin-Tl1c (Trittame loki (Brush-footed trapdoor spider)).